We begin with the raw amino-acid sequence, 178 residues long: SsrA-binding protein (178 aa).

Positions 1–28 (MAKKSTPVDSGRSKGKKASAPRGGGPAV) are disordered.

The protein belongs to the SmpB family.

It is found in the cytoplasm. Required for rescue of stalled ribosomes mediated by trans-translation. Binds to transfer-messenger RNA (tmRNA), required for stable association of tmRNA with ribosomes. tmRNA and SmpB together mimic tRNA shape, replacing the anticodon stem-loop with SmpB. tmRNA is encoded by the ssrA gene; the 2 termini fold to resemble tRNA(Ala) and it encodes a 'tag peptide', a short internal open reading frame. During trans-translation Ala-aminoacylated tmRNA acts like a tRNA, entering the A-site of stalled ribosomes, displacing the stalled mRNA. The ribosome then switches to translate the ORF on the tmRNA; the nascent peptide is terminated with the 'tag peptide' encoded by the tmRNA and targeted for degradation. The ribosome is freed to recommence translation, which seems to be the essential function of trans-translation. The sequence is that of SsrA-binding protein from Corynebacterium urealyticum (strain ATCC 43042 / DSM 7109).